We begin with the raw amino-acid sequence, 490 residues long: ATP synthase subunit alpha 1 (490 aa).

The protein belongs to the ATPase alpha/beta chains family. F-type ATPases have 2 components, CF(1) - the catalytic core - and CF(0) - the membrane proton channel. CF(1) has five subunits: alpha(3), beta(3), gamma(1), delta(1), epsilon(1). CF(0) has three main subunits: a(1), b(2) and c(9-12). The alpha and beta chains form an alternating ring which encloses part of the gamma chain. CF(1) is attached to CF(0) by a central stalk formed by the gamma and epsilon chains, while a peripheral stalk is formed by the delta and b chains.

It is found in the cell inner membrane. The catalysed reaction is ATP + H2O + 4 H(+)(in) = ADP + phosphate + 5 H(+)(out). Its function is as follows. Produces ATP from ADP in the presence of a proton gradient across the membrane. The alpha chain is a regulatory subunit. The sequence is that of ATP synthase subunit alpha 1 from Legionella pneumophila (strain Paris).